We begin with the raw amino-acid sequence, 380 residues long: MSLNVFWFLPTHGDGRYLGSTEGARHVDYSYLQQVAQAAERQGFGGVLLPTGRSCEDSWLVAASLIPVTQRLKFLVALRPGVISPTIAARQAATLDRLSNGRALFNLVTGGDPEELAAEGLFLSHEERYEASAEFTHIWRRLLEGETVDFAGKHIQVKDAKLLYPPVQQPRPPLYFGGSSEAAQDLAAEQVDLYLTWGEPPEQVKEKLAEVRAKAAAQGREVRFGIRLHVIVRETTEEAWQAAERLISHLDEKTIADAQAALARFDSVGQQRMAALHGGKKDKLEISPNLWAGIGLVRGGAGTALVGDGPTVAERIKEYADLGIDTFILSGYPHLEEAYRVGELLFPHLDLAQQPTPLHAVSNAGEVVANRYVPRKVSQS.

The protein belongs to the SsuD family. In terms of assembly, homotetramer.

The catalysed reaction is an alkanesulfonate + FMNH2 + O2 = an aldehyde + FMN + sulfite + H2O + 2 H(+). Functionally, catalyzes the desulfonation of aliphatic sulfonates. The protein is Alkanesulfonate monooxygenase of Pectobacterium atrosepticum (strain SCRI 1043 / ATCC BAA-672) (Erwinia carotovora subsp. atroseptica).